The following is a 265-amino-acid chain: MSWRPPAHNAEGQEGLWYRSVCQSHGAFCGCGDFVGHLNRLAERLGRPQPPRPPGGPPGPAIRVLPALPPAEGSPRRHNRTENQPCGGGDADFGDQRDAGDGGAAADDLSPADVEDLLDWLDAPDRLSKTPVNNPPLTSPVPVESLVQYKLSTRSTSTRASRSTDGTSDVASLGRQLLKECKQNQQMLSFLQQVQNAQEQRSPWPLQETPYLPGRENAKPGKTRPRKKPRAKQKPKKRRRYRSSSNSSSKSNDSSDAESSTCSSN.

Disordered stretches follow at residues R44–S110, S152–A171, and V194–N265. Pro residues predominate over residues P48–P60. Positions S152–S168 are enriched in low complexity. Residues G221 to R242 show a composition bias toward basic residues. Low complexity predominate over residues S243–N265.

Post-translationally, phosphorylated at C-terminal serines.

The polypeptide is Probable protein VP2 (Torque teno virus (isolate Human/Germany/KAV/2001) (TTV)).